The chain runs to 51 residues: Large ribosomal subunit protein eL40 (51 aa).

Zn(2+) contacts are provided by C17, C20, C31, and C34.

Belongs to the eukaryotic ribosomal protein eL40 family. In terms of assembly, part of the 50S ribosomal subunit. It depends on Zn(2+) as a cofactor.

This chain is Large ribosomal subunit protein eL40, found in Thermococcus kodakarensis (strain ATCC BAA-918 / JCM 12380 / KOD1) (Pyrococcus kodakaraensis (strain KOD1)).